Here is a 626-residue protein sequence, read N- to C-terminus: Elongation factor 4 (626 aa).

Residues 14 to 195 (SVIRNFCIIA…QIVMDVPAPH (182 aa)) form the tr-type G domain. GTP is bound by residues 26 to 31 (DHGKST) and 142 to 145 (NKID). A disordered region spans residues 603 to 626 (LSTGEDSNDRDTKDKIRAAQKTEG). Over residues 609 to 626 (SNDRDTKDKIRAAQKTEG) the composition is skewed to basic and acidic residues.

This sequence belongs to the TRAFAC class translation factor GTPase superfamily. Classic translation factor GTPase family. LepA subfamily.

The protein resides in the cell membrane. The catalysed reaction is GTP + H2O = GDP + phosphate + H(+). Its function is as follows. Required for accurate and efficient protein synthesis under certain stress conditions. May act as a fidelity factor of the translation reaction, by catalyzing a one-codon backward translocation of tRNAs on improperly translocated ribosomes. Back-translocation proceeds from a post-translocation (POST) complex to a pre-translocation (PRE) complex, thus giving elongation factor G a second chance to translocate the tRNAs correctly. Binds to ribosomes in a GTP-dependent manner. The sequence is that of Elongation factor 4 from Bifidobacterium longum (strain DJO10A).